A 270-amino-acid chain; its full sequence is Putative pyruvate, phosphate dikinase regulatory protein (270 aa).

151-158 is a binding site for ADP; the sequence is GVSRTSKT.

It belongs to the pyruvate, phosphate/water dikinase regulatory protein family. PDRP subfamily.

The catalysed reaction is N(tele)-phospho-L-histidyl/L-threonyl-[pyruvate, phosphate dikinase] + ADP = N(tele)-phospho-L-histidyl/O-phospho-L-threonyl-[pyruvate, phosphate dikinase] + AMP + H(+). It carries out the reaction N(tele)-phospho-L-histidyl/O-phospho-L-threonyl-[pyruvate, phosphate dikinase] + phosphate + H(+) = N(tele)-phospho-L-histidyl/L-threonyl-[pyruvate, phosphate dikinase] + diphosphate. Bifunctional serine/threonine kinase and phosphorylase involved in the regulation of the pyruvate, phosphate dikinase (PPDK) by catalyzing its phosphorylation/dephosphorylation. The protein is Putative pyruvate, phosphate dikinase regulatory protein (yqfL) of Bacillus subtilis (strain 168).